Consider the following 408-residue polypeptide: Argininosuccinate synthase (408 aa).

Residue Ala8–Thr16 participates in ATP binding. Residue Tyr86 coordinates L-citrulline. Gly116 serves as a coordination point for ATP. Positions 118, 122, and 123 each coordinate L-aspartate. Asn122 is a binding site for L-citrulline. Residues Arg126, Ser177, Ser186, Glu263, and Tyr275 each contribute to the L-citrulline site.

The protein belongs to the argininosuccinate synthase family. Type 1 subfamily. In terms of assembly, homotetramer.

It localises to the cytoplasm. It catalyses the reaction L-citrulline + L-aspartate + ATP = 2-(N(omega)-L-arginino)succinate + AMP + diphosphate + H(+). The protein operates within amino-acid biosynthesis; L-arginine biosynthesis; L-arginine from L-ornithine and carbamoyl phosphate: step 2/3. This Agathobacter rectalis (strain ATCC 33656 / DSM 3377 / JCM 17463 / KCTC 5835 / VPI 0990) (Eubacterium rectale) protein is Argininosuccinate synthase.